The following is a 123-amino-acid chain: Ribosome-binding factor A (123 aa).

This sequence belongs to the RbfA family. Monomer. Binds 30S ribosomal subunits, but not 50S ribosomal subunits or 70S ribosomes.

It is found in the cytoplasm. In terms of biological role, one of several proteins that assist in the late maturation steps of the functional core of the 30S ribosomal subunit. Associates with free 30S ribosomal subunits (but not with 30S subunits that are part of 70S ribosomes or polysomes). Required for efficient processing of 16S rRNA. May interact with the 5'-terminal helix region of 16S rRNA. The protein is Ribosome-binding factor A of Solibacter usitatus (strain Ellin6076).